Reading from the N-terminus, the 210-residue chain is Chaperone protein TorD (210 aa).

It belongs to the TorD/DmsD family. TorD subfamily.

Its subcellular location is the cytoplasm. Its function is as follows. Involved in the biogenesis of TorA. Acts on TorA before the insertion of the molybdenum cofactor and, as a result, probably favors a conformation of the apoenzyme that is competent for acquiring the cofactor. In Salmonella paratyphi B (strain ATCC BAA-1250 / SPB7), this protein is Chaperone protein TorD.